A 334-amino-acid polypeptide reads, in one-letter code: Nucleoid-associated protein SG1574 (334 aa).

The protein belongs to the YejK family.

Its subcellular location is the cytoplasm. It is found in the nucleoid. The sequence is that of Nucleoid-associated protein SG1574 from Sodalis glossinidius (strain morsitans).